The following is a 419-amino-acid chain: Transcription regulator lscL (419 aa).

Positions 12–35 (RIRKVKCDEKKPCCQKCIDTGRTC) form a DNA-binding region, zn(2)-C6 fungal-type.

The protein localises to the nucleus. Its function is as follows. Transcription factor that may coregulate the expression of the gene cluster that mediates the biosynthesis of the lipopeptide antibiotics leucinostatins that show extensive biological activities, including antimalarial, antiviral, antibacterial, antifungal, and antitumor activities, as well as phytotoxic. This is Transcription regulator lscL from Purpureocillium lilacinum (Paecilomyces lilacinus).